The sequence spans 511 residues: MRLPVSFPLTVLSLLGSTIAHPYGETEAVLRSEPKSNQAKADAVKEAFQHAWNGYMKYAFPHDELTPVSNGHADSRNGWGASAVDALSTAVIMGKADVVNAILEHVADIDFSKTSDTVSLFETTIRYLAGMLSGYDLLQGPAKNLVDNQDLIDGLLDQSRNLADVLKFAFDTPSGVPYNNINITSHGNDGATTNGLAVTGTLVLEWTRLSDLTGDEEYAKLSQKAESYLLKPQPSSSEPFPGLVGSSININDGQFADSRVSWNGGDDSFYEYLIKMYVYDPKRFETYKDRWVLAAESTIKHLKSHPKSRPDLTFLSSYSNRNYDLSSQHLTCFDGGSFLLGGTVLDRQDFIDFGLELVDGCEATYNSTLTKIGPDSWGWDPKKVPSDQKEFYEKAGFYISSGSYVLRPEVIESFYYAHRVTGKEIYRDWVWNAFVAINSTCRTDSGFAAVSDVNKANGGSKYDNQESFLFAEVMKYSYLAHSEDAAWQVQKGGKNTFVYNTEAHPISVARN.

Positions 1 to 35 are cleaved as a signal peptide; it reads MRLPVSFPLTVLSLLGSTIAHPYGETEAVLRSEPK. A glycan (N-linked (GlcNAc...) asparagine) is linked at N182. C332 and C361 form a disulfide bridge. N366 carries an N-linked (GlcNAc...) asparagine glycan. D375 (proton donor) is an active-site residue. N-linked (GlcNAc...) asparagine glycosylation occurs at N438. T501 is a binding site for Ca(2+).

It belongs to the glycosyl hydrolase 47 family. In terms of assembly, homodimer. Ca(2+) is required as a cofactor.

It is found in the secreted. It catalyses the reaction N(4)-(alpha-D-Man-(1-&gt;2)-alpha-D-Man-(1-&gt;2)-alpha-D-Man-(1-&gt;3)-[alpha-D-Man-(1-&gt;2)-alpha-D-Man-(1-&gt;3)-[alpha-D-Man-(1-&gt;2)-alpha-D-Man-(1-&gt;6)]-alpha-D-Man-(1-&gt;6)]-beta-D-Man-(1-&gt;4)-beta-D-GlcNAc-(1-&gt;4)-beta-D-GlcNAc)-L-asparaginyl-[protein] (N-glucan mannose isomer 9A1,2,3B1,2,3) + 4 H2O = N(4)-(alpha-D-Man-(1-&gt;3)-[alpha-D-Man-(1-&gt;3)-[alpha-D-Man-(1-&gt;6)]-alpha-D-Man-(1-&gt;6)]-beta-D-Man-(1-&gt;4)-beta-D-GlcNAc-(1-&gt;4)-beta-D-GlcNAc)-L-asparaginyl-[protein] (N-glucan mannose isomer 5A1,2) + 4 beta-D-mannose. It carries out the reaction N(4)-(alpha-D-Man-(1-&gt;2)-alpha-D-Man-(1-&gt;2)-alpha-D-Man-(1-&gt;3)-[alpha-D-Man-(1-&gt;3)-[alpha-D-Man-(1-&gt;2)-alpha-D-Man-(1-&gt;6)]-alpha-D-Man-(1-&gt;6)]-beta-D-Man-(1-&gt;4)-beta-D-GlcNAc-(1-&gt;4)-beta-D-GlcNAc)-L-asparaginyl-[protein] (N-glucan mannose isomer 8A1,2,3B1,3) + 3 H2O = N(4)-(alpha-D-Man-(1-&gt;3)-[alpha-D-Man-(1-&gt;3)-[alpha-D-Man-(1-&gt;6)]-alpha-D-Man-(1-&gt;6)]-beta-D-Man-(1-&gt;4)-beta-D-GlcNAc-(1-&gt;4)-beta-D-GlcNAc)-L-asparaginyl-[protein] (N-glucan mannose isomer 5A1,2) + 3 beta-D-mannose. It participates in protein modification; protein glycosylation. Involved in the maturation of Asn-linked oligosaccharides. Progressively trim alpha-1,2-linked mannose residues from Man(9)GlcNAc(2) to produce Man(5)GlcNAc(2). The polypeptide is Mannosyl-oligosaccharide alpha-1,2-mannosidase (MSDC) (Penicillium citrinum).